The following is a 420-amino-acid chain: Protein translocase subunit SecY (420 aa).

The next 10 helical transmembrane spans lie at 9–29, 61–81, 104–124, 141–161, 173–193, 203–223, 257–277, 300–320, 355–375, and 377–397; these read ILITLGFLFLYRVLAYIPIPG, LSIISLGIMPYITSSIIMELL, IVRYLTILITLIQAVSVSVGL, VFMIVSAFSMLTGTMLLMWIG, ISLIIFAGIVSGIPSAISGTF, ILMLIGIVLIVLATIFAIIYV, LSGVIPPIFASALLVFPSTIL, YNILMFLLIIFFAYFYSSIVF, KLTLWGSLYLALISTVPWILV, and AMGVPFYFGGTAVLIVVQVAI.

It belongs to the SecY/SEC61-alpha family. In terms of assembly, component of the Sec protein translocase complex. Heterotrimer consisting of SecY, SecE and SecG subunits. The heterotrimers can form oligomers, although 1 heterotrimer is thought to be able to translocate proteins. Interacts with the ribosome. Interacts with SecDF, and other proteins may be involved. Interacts with SecA.

It localises to the cell inner membrane. The central subunit of the protein translocation channel SecYEG. Consists of two halves formed by TMs 1-5 and 6-10. These two domains form a lateral gate at the front which open onto the bilayer between TMs 2 and 7, and are clamped together by SecE at the back. The channel is closed by both a pore ring composed of hydrophobic SecY resides and a short helix (helix 2A) on the extracellular side of the membrane which forms a plug. The plug probably moves laterally to allow the channel to open. The ring and the pore may move independently. This Helicobacter pylori (strain ATCC 700392 / 26695) (Campylobacter pylori) protein is Protein translocase subunit SecY.